We begin with the raw amino-acid sequence, 1410 residues long: Non-secreted LysM effector LysM15 (1410 aa).

LysM domains are found at residues 1179–1225 (TTYT…DICM) and 1231–1277 (TQYT…EILG). A compositionally biased stretch (low complexity) spans 1291–1303 (TTGDGITTTPGNG). The interval 1291-1317 (TTGDGITTTPGNGEYAQGVVSPPENST) is disordered. The LysM 3 domain occupies 1328-1375 (RWYSATADDLCVQICLKSGVSAKLFKAANPSLAADCDNSLIAGDAYCV).

Belongs to the secreted LysM effector family.

Its function is as follows. Non-secreted LysM effector that might be involved in manipulation of host defenses for successful infection. This Penicillium expansum (Blue mold rot fungus) protein is Non-secreted LysM effector LysM15.